The sequence spans 226 residues: MSSDAAAQERLPGLLLVLSAPSGAGKTTLAHRLREASPDAVFSISATTRAPRGAEREGVDYHFVTAERFTELVAQGAFAEWAEVHGQRYGTLRATVDEALAAGKLALFDIDVQGGAQIKAAWPQQAATVLVLPPDEAELERRLRGRDTDSDETIRRRLVAARAEVARGLGSYDYVVVNDVLEGALAQLQAIVRHERLRHAGRWDPEAARVAEACRRSAAPLGGWAS.

Positions 13 to 193 (GLLLVLSAPS…ALAQLQAIVR (181 aa)) constitute a Guanylate kinase-like domain. 20–27 (APSGAGKT) serves as a coordination point for ATP.

This sequence belongs to the guanylate kinase family.

It is found in the cytoplasm. It carries out the reaction GMP + ATP = GDP + ADP. In terms of biological role, essential for recycling GMP and indirectly, cGMP. The polypeptide is Guanylate kinase (Anaeromyxobacter dehalogenans (strain 2CP-C)).